Here is a 117-residue protein sequence, read N- to C-terminus: DNA-directed RNA polymerase II subunit RPB11 (117 aa).

Methionine 1 is subject to N-acetylmethionine.

Belongs to the archaeal Rpo11/eukaryotic RPB11/RPC19 RNA polymerase subunit family. Component of the RNA polymerase II (Pol II) core complex consisting of 12 subunits: a ten-subunit catalytic core composed of POLR2A/RPB1, POLR2B/RPB2, POLR2C/RPB3, POLR2I/RPB9, POLR2J/RPB11, POLR2E/RPABC1, POLR2F/RPABC2, POLR2H/RPABC3, POLR2K/RPABC4 and POLR2L/RPABC5 and a mobile stalk composed of two subunits POLR2D/RPB4 and POLR2G/RPB7, protruding from the core and functioning primarily in transcription initiation. Part of Pol II(G) complex, in which Pol II core associates with an additional subunit POLR2M; unlike conventional Pol II, Pol II(G) functions as a transcriptional repressor. Part of TBP-based Pol II pre-initiation complex (PIC), in which Pol II core assembles with general transcription factors and other specific initiation factors including GTF2E1, GTF2E2, GTF2F1, GTF2F2, TCEA1, ERCC2, ERCC3, GTF2H2, GTF2H3, GTF2H4, GTF2H5, GTF2A1, GTF2A2, GTF2B and TBP; this large multi-subunit PIC complex mediates DNA unwinding and targets Pol II core to the transcription start site where the first phosphodiester bond forms. Interacts with AATF. Interacts with PTPN6; this interaction promotes the recruitment of RNA pol II to the PCK1 promoter.

Its subcellular location is the nucleus. Core component of RNA polymerase II (Pol II), a DNA-dependent RNA polymerase which synthesizes mRNA precursors and many functional non-coding RNAs using the four ribonucleoside triphosphates as substrates. The polypeptide is DNA-directed RNA polymerase II subunit RPB11 (Polr2j) (Mus musculus (Mouse)).